The chain runs to 496 residues: Cytochrome P450 monooxygenase claT (496 aa).

The chain crosses the membrane as a helical span at residues 2-22 (LSLIVEATLLLVVLVLSAHYV). Cys423 contributes to the heme binding site.

It belongs to the cytochrome P450 family. Heme serves as cofactor.

The protein localises to the membrane. It catalyses the reaction wigandol + 4 reduced [NADPH--hemoprotein reductase] + 4 O2 = arnebinol A + 4 oxidized [NADPH--hemoprotein reductase] + 6 H2O + 4 H(+). The catalysed reaction is arnebinol A + reduced [NADPH--hemoprotein reductase] + O2 = clavilactone A + oxidized [NADPH--hemoprotein reductase] + H2O + H(+). The enzyme catalyses (2E)-geranylhydroquinone + reduced [NADPH--hemoprotein reductase] + O2 = isoalliodorol + oxidized [NADPH--hemoprotein reductase] + H2O + H(+). It functions in the pathway secondary metabolite biosynthesis; terpenoid biosynthesis. Cytochrome P450 monooxygenase; part of the gene cluster that mediates the biosynthesis of clavilactone A, a meroterpenoid that features a unique benzo-fused ten-membered carbocyclic ring unit with an alpha,beta-epoxy-gamma-lactone moiety, forming an intriguing 10/5/3 tricyclic nested skeleton. ClaR, ClaS and ClaT are sufficient to produce clavilactone A. Within the pathway, claT acts as a multifunctional cytochrome P450 monooxygenase that catalyzes a ten-electron oxidation to accomplish the biosynthesis of the 10/5/3 tricyclic nested skeleton in clavilactones. The biosynthesis begins with the prenyltransferase claS that transfers geranyl pyrophosphate (GPP) to hydroquinone to produces geranylhydroquinone. The cytochrome P450 monooxygenase claR then catalyzes the diradical coupling reaction between the intramolecular hydroquinone and allyl moieties to form the benzo-fused ten-membered carbocyclic ring unit of wigantol. Finally the cytochrome P450 monooxygenase claT exquisitely and stereoselectively assembles the alpha,beta-epoxy-gamma-lactone moiety, producing clavilactone A via arnebinol A. The protein is Cytochrome P450 monooxygenase claT of Ampulloclitocybe clavipes (Club foot).